The following is a 143-amino-acid chain: Late embryogenesis abundant protein 1 (143 aa).

The segment covering 1–17 (MSSQQNQNRQGEQQEQG) has biased composition (low complexity). Positions 1-143 (MSSQQNQNRQ…QAGEKVKGRD (143 aa)) are disordered. Repeat copies occupy residues 47 to 57 (KTAEFRDSAGE), 69 to 79 (KGQEFKERAGE), 80 to 90 (KAEETKQRAGE), and 91 to 101 (KMDETKQRAGE). Basic and acidic residues-rich tracts occupy residues 47–60 (KTAE…ETIR) and 69–143 (KGQE…KGRD). Residues 47–101 (KTAEFRDSAGETIRDLTGQAQEKGQEFKERAGEKAEETKQRAGEKMDETKQRAGE) are 4 X 11 AA approximate repeats.

The protein belongs to the LEA type 4 family.

Its function is as follows. May be involved in defense against water stress. This is Late embryogenesis abundant protein 1 from Aphelenchoides avenae (Mycophagous nematode worm).